The chain runs to 614 residues: DNA-directed DNA polymerase (614 aa).

The protein belongs to the DNA polymerase type-A family.

It catalyses the reaction DNA(n) + a 2'-deoxyribonucleoside 5'-triphosphate = DNA(n+1) + diphosphate. In terms of biological role, replicates viral genomic DNA. This polymerase possesses two enzymatic activities: DNA synthesis (polymerase) and an exonucleolytic activity that degrades single-stranded DNA in the 3'-5' direction. This chain is DNA-directed DNA polymerase, found in Escherichia coli (Escherichia coli phage phi32).